The following is a 38-amino-acid chain: Large ribosomal subunit protein bL36 (38 aa).

It belongs to the bacterial ribosomal protein bL36 family.

This chain is Large ribosomal subunit protein bL36, found in Pelodictyon phaeoclathratiforme (strain DSM 5477 / BU-1).